A 251-amino-acid polypeptide reads, in one-letter code: Zinc import ATP-binding protein ZnuC (251 aa).

An ABC transporter domain is found at 5-220 (VSLENVSVSF…PEFISMFGPR (216 aa)). 37-44 (GPNGAGKS) contributes to the ATP binding site.

The protein belongs to the ABC transporter superfamily. Zinc importer (TC 3.A.1.15.5) family. In terms of assembly, the complex is composed of two ATP-binding proteins (ZnuC), two transmembrane proteins (ZnuB) and a solute-binding protein (ZnuA).

Its subcellular location is the cell inner membrane. The enzyme catalyses Zn(2+)(out) + ATP(in) + H2O(in) = Zn(2+)(in) + ADP(in) + phosphate(in) + H(+)(in). Part of the ABC transporter complex ZnuABC involved in zinc import. Responsible for energy coupling to the transport system. This Salmonella choleraesuis (strain SC-B67) protein is Zinc import ATP-binding protein ZnuC.